The following is a 124-amino-acid chain: Prefoldin subunit beta (124 aa).

This sequence belongs to the prefoldin subunit beta family. Heterohexamer of two alpha and four beta subunits.

It localises to the cytoplasm. Functionally, molecular chaperone capable of stabilizing a range of proteins. Seems to fulfill an ATP-independent, HSP70-like function in archaeal de novo protein folding. This Pyrobaculum arsenaticum (strain DSM 13514 / JCM 11321 / PZ6) protein is Prefoldin subunit beta.